A 207-amino-acid polypeptide reads, in one-letter code: Small ribosomal subunit protein uS2 (207 aa).

The protein belongs to the universal ribosomal protein uS2 family.

This chain is Small ribosomal subunit protein uS2, found in Methanocella arvoryzae (strain DSM 22066 / NBRC 105507 / MRE50).